A 449-amino-acid chain; its full sequence is F-box/LRR-repeat protein At3g60040 (449 aa).

Residues 12-64 (RDAISWLPDEVLGKILSLIPTKQAVSTSLLAKKWRTIFRLVDHLELDDSFSLQ) enclose the F-box domain. LRR repeat units lie at residues 161 to 188 (LTLG…FIDT), 191 to 215 (FYDI…SVHH), 216 to 237 (HDFI…SVDY), 239 to 263 (CPDD…EYSH), 287 to 312 (ERKV…HLSP), and 340 to 365 (KNKR…IVKD).

This Arabidopsis thaliana (Mouse-ear cress) protein is F-box/LRR-repeat protein At3g60040.